The following is a 569-amino-acid chain: Linoleate hydratase (569 aa).

Tyr87 contributes to the FAD binding site. Catalysis depends on Tyr205, which acts as the Proton donor. Residues Val254, Ser300, and Thr524 each coordinate FAD.

It belongs to the oleate hydratase family. Requires FAD as cofactor.

It is found in the cell membrane. Its subcellular location is the cytoplasm. It carries out the reaction (9Z,12Z)-octadecadienoate + H2O = (10S)-hydroxy-(12Z)-octadecenoate. The catalysed reaction is (10E,12Z)-octadecadienoate + H2O = (10S)-hydroxy-(12Z)-octadecenoate. It catalyses the reaction (9Z)-octadecenoate + H2O = 10-hydroxyoctadecanoate. The enzyme catalyses (10E)-octadecenoate + H2O = 10-hydroxyoctadecanoate. It carries out the reaction (9E,11E)-octadecadienoate + H2O = 10-hydroxy-(11E)-octadecenoate. The catalysed reaction is (9Z,11E)-octadecadienoate + H2O = 10-hydroxy-(11E)-octadecenoate. It catalyses the reaction (9Z)-hexadecenoate + H2O = 10-hydroxyhexadecanoate. The enzyme catalyses (9Z,12Z,15Z)-octadecatrienoate + H2O = (10S)-hydroxy-(12Z,15Z)-octadecadienoate. It carries out the reaction (6Z,9Z,12Z)-octadecatrienoate + H2O = (10S)-hydroxy-(6Z,12Z)-octadecadienoate. The catalysed reaction is (6Z,9Z,12Z,15Z)-octadecatetraenoate + H2O = (10S)-hydroxy-(6Z,12Z,15Z)-octadecatrienoate. The protein operates within lipid metabolism; fatty acid metabolism. Its activity is regulated as follows. The addition of NADH or NADPH highly increases catalytic activity, likely by reducing the cofactor FAD to FADH2. The hydration and dehydration reactions are strongly inhibited by Ag(+), Fe(2+), Cu(2+), Zn(2+), Hg(2+), and Fe(3+). Functionally, is involved in a saturation metabolic pathway of polyunsaturated fatty acids, that detoxifies unsaturated fatty acids and generates hydroxy fatty acids, oxo fatty acids, conjugated fatty acids such as conjugated linoleic acids (CLAs), and partially saturated trans-fatty acids as intermediates. CLA-HY catalyzes the hydration and dehydration steps in the production of 10-hydroxy-cis-12-octadecenoate, trans-10,cis-12-CLA, cis-9,trans-11-CLA, trans-9,trans-11-CLA, oleate and trans-10-octadecenoate during linoleate metabolism. Is also able to hydrate palmitoleic acid (cis-9-hexadecenoic acid), oleic acid, alpha-linolenic acid, gamma-linolenic acid, and stearidonic acid into the corresponding 10-hydroxy fatty acids, and dehydrate 10-hydroxy-cis-12,cis-15-octadecadienoic acid, 10-hydroxy-cis-6,cis-12-octadecadienoic acid, and 10-hydroxyoctadecanoic acid into the corresponding fatty acids with cis double bonds at the Delta9 position. As part of the gut microbiome, this enzyme modifies host fatty acid composition and is expected to improve human health by altering lipid metabolism related to the onset of metabolic syndrome. Shows regioselectivity for Delta9 double bond hydration, generating C10 hydroxy groups in the (S)-configuration with high enantioselectivity, when another double bond is in position 12. Is not able to hydrate fatty acids with a trans carbon-carbon double bond at Delta9 position (elaidic acid, trans-9-octadecenoic acid), fatty acid esters (methyl linoleate, monolinolein, dilinolein, and trilinolein), and conjugated fatty acids (conjugated linoleic acids), as well as fatty acids with other chain lengths, such as myristoleic acid (cis-9-tetradecenoic acid), arachidonic acid (cis-5,cis-8,cis-11,cis-14-eicosatetraenoic acid), EPA (cis-5,cis-8,cis-11,cis-14,cis-17-eicosapentaenoic acid), DHA (cis-4,cis-7,cis-10,cis-13,cis-16,cis-19-docosahexaenoic acid) and fatty acids with a cis carbon-carbon double bond at Delta11 position, such as cis-vaccenic acid and cis-11-octadecenoic acid, or fatty alcohols, such as linoleyl alcohol. Is not able to dehydrate 12-hydroxy, 3-hydroxy, and 9-hydroxy fatty acids. This chain is Linoleate hydratase, found in Lactiplantibacillus plantarum (Lactobacillus plantarum).